Here is an 81-residue protein sequence, read N- to C-terminus: Extracellular matrix regulatory protein B (81 aa).

Its function is as follows. Regulates the biosynthesis of the extracellular matrix and the biofilm formation. May act as an enhancer of biofilm gene expression. Acts in parallel to the pathway that governs SinR derepression. This Bacillus subtilis (strain 168) protein is Extracellular matrix regulatory protein B.